A 687-amino-acid chain; its full sequence is DNA-directed RNA polymerase subunit beta' (687 aa).

Positions 76, 78, 94, and 97 each coordinate Zn(2+). Residues Asp496, Asp498, and Asp500 each contribute to the Mg(2+) site.

The protein belongs to the RNA polymerase beta' chain family. RpoC1 subfamily. In terms of assembly, in plastids the minimal PEP RNA polymerase catalytic core is composed of four subunits: alpha, beta, beta', and beta''. When a (nuclear-encoded) sigma factor is associated with the core the holoenzyme is formed, which can initiate transcription. Mg(2+) serves as cofactor. Requires Zn(2+) as cofactor.

The protein localises to the plastid. The protein resides in the chloroplast. The catalysed reaction is RNA(n) + a ribonucleoside 5'-triphosphate = RNA(n+1) + diphosphate. Its function is as follows. DNA-dependent RNA polymerase catalyzes the transcription of DNA into RNA using the four ribonucleoside triphosphates as substrates. The sequence is that of DNA-directed RNA polymerase subunit beta' from Ipomoea purpurea (Common morning glory).